A 700-amino-acid chain; its full sequence is Calpain-2 catalytic subunit (700 aa).

N-acetylalanine is present on A2. Residues 2–19 (AGIAAKLAKDREAAEGLG) constitute a propeptide, anchors to the small subunit. The Calpain catalytic domain occupies 45-344 (LFQDPSFPAI…YSRLEICNLT (300 aa)). Ca(2+)-binding residues include I89, G91, and D96. C105 is a catalytic residue. Ca(2+) contacts are provided by E175, Q229, and K230. Active-site residues include H262 and N286. Positions 292, 299, and 323 each coordinate Ca(2+). Residues 345 to 514 (PDTLTSDTYK…KKADYQAVDD (170 aa)) are domain III. Residues 515-529 (EIEANLEEFDISEDD) form a linker region. The segment at 530–700 (IDDGFRRLFA…LISWLCFSVL (171 aa)) is domain IV. Ca(2+)-binding residues include A542, D545, E547, E552, D585, D587, S589, K591, E596, D615, D617, S619, T621, E626, D658, and N661. 2 consecutive EF-hand domains span residues 572-605 (FSIE…TKIQ) and 602-637 (TKIQ…AGFK). In terms of domain architecture, EF-hand 3 spans 667 to 700 (VRLETLFKIFKQLDPENTGTIELDLISWLCFSVL).

Belongs to the peptidase C2 family. As to quaternary structure, forms a heterodimer with a small (regulatory) subunit (CAPNS1). Interacts with CPEB3; this leads to cleavage of CPEB3. Interacts with PIDD1 alternative open reading frame protein altPIDD1. Ca(2+) is required as a cofactor. Ubiquitous.

Its subcellular location is the cytoplasm. It is found in the cell membrane. The enzyme catalyses Broad endopeptidase specificity.. With respect to regulation, activated by 200-1000 micromolar concentrations of calcium and inhibited by calpastatin. In terms of biological role, calcium-regulated non-lysosomal thiol-protease which catalyzes limited proteolysis of substrates involved in cytoskeletal remodeling and signal transduction. Proteolytically cleaves MYOC at 'Arg-226'. Proteolytically cleaves CPEB3 following neuronal stimulation which abolishes CPEB3 translational repressor activity, leading to translation of CPEB3 target mRNAs. This chain is Calpain-2 catalytic subunit (CAPN2), found in Homo sapiens (Human).